Consider the following 472-residue polypeptide: Adenosylhomocysteinase (472 aa).

Residues Thr61, Asp136, and Glu196 each coordinate substrate. Residue 197–199 participates in NAD(+) binding; it reads TTT. The substrate site is built by Lys226 and Asp230. Residues Asn231, 260–265, Glu283, Asn318, 339–341, and Asn384 contribute to the NAD(+) site; these read GYGDVG and IGH.

It belongs to the adenosylhomocysteinase family. NAD(+) is required as a cofactor.

Its subcellular location is the cytoplasm. It catalyses the reaction S-adenosyl-L-homocysteine + H2O = L-homocysteine + adenosine. It participates in amino-acid biosynthesis; L-homocysteine biosynthesis; L-homocysteine from S-adenosyl-L-homocysteine: step 1/1. Its function is as follows. May play a key role in the regulation of the intracellular concentration of adenosylhomocysteine. The sequence is that of Adenosylhomocysteinase from Cupriavidus pinatubonensis (strain JMP 134 / LMG 1197) (Cupriavidus necator (strain JMP 134)).